The primary structure comprises 318 residues: L-lactate dehydrogenase (318 aa).

Residues valine 18, aspartate 39, lysine 44, tyrosine 69, and 83–84 (GA) contribute to the NAD(+) site. Residues glutamine 86 and arginine 92 each contribute to the substrate site. Residues serine 105, 122 to 124 (VSN), and serine 147 contribute to the NAD(+) site. 124–127 (NPVD) is a substrate binding site. 152 to 155 (DTSR) lines the substrate pocket. The active-site Proton acceptor is the histidine 179. Residue tyrosine 225 is modified to Phosphotyrosine. Threonine 234 contributes to the substrate binding site.

Belongs to the LDH/MDH superfamily. LDH family. As to quaternary structure, homotetramer.

It localises to the cytoplasm. The catalysed reaction is (S)-lactate + NAD(+) = pyruvate + NADH + H(+). It participates in fermentation; pyruvate fermentation to lactate; (S)-lactate from pyruvate: step 1/1. In terms of biological role, catalyzes the conversion of lactate to pyruvate. The polypeptide is L-lactate dehydrogenase (Clostridium botulinum (strain Langeland / NCTC 10281 / Type F)).